The sequence spans 550 residues: Eukaryotic translation initiation factor 3 subunit D-2 (550 aa).

The tract at residues 108 to 152 (RTRGRTGRGTPNIASLGGSTAGGATASTTKYGKGRHTRNTQNVGR) is disordered. The span at 115–136 (RGTPNIASLGGSTAGGATASTT) shows a compositional bias: low complexity. The RNA gate stretch occupies residues 290–304 (QFDLLTVNETSVEPP). The segment at 527-550 (PENAFDSDRDEEESSEPLSNSNDN) is disordered.

It belongs to the eIF-3 subunit D family. In terms of assembly, component of the eukaryotic translation initiation factor 3 (eIF-3) complex. The eIF-3 complex interacts with pix.

The protein resides in the cytoplasm. In terms of biological role, mRNA cap-binding component of the eukaryotic translation initiation factor 3 (eIF-3) complex, which is involved in protein synthesis of a specialized repertoire of mRNAs and, together with other initiation factors, stimulates binding of mRNA and methionyl-tRNAi to the 40S ribosome. The eIF-3 complex specifically targets and initiates translation of a subset of mRNAs involved in cell proliferation. In the eIF-3 complex, eif3d specifically recognizes and binds the 7-methylguanosine cap of a subset of mRNAs. This Drosophila sechellia (Fruit fly) protein is Eukaryotic translation initiation factor 3 subunit D-2.